A 573-amino-acid polypeptide reads, in one-letter code: 2-succinyl-5-enolpyruvyl-6-hydroxy-3-cyclohexene-1-carboxylate synthase (573 aa).

It belongs to the TPP enzyme family. MenD subfamily. Homodimer. Requires Mg(2+) as cofactor. Mn(2+) is required as a cofactor. Thiamine diphosphate serves as cofactor.

It carries out the reaction isochorismate + 2-oxoglutarate + H(+) = 5-enolpyruvoyl-6-hydroxy-2-succinyl-cyclohex-3-ene-1-carboxylate + CO2. It functions in the pathway quinol/quinone metabolism; 1,4-dihydroxy-2-naphthoate biosynthesis; 1,4-dihydroxy-2-naphthoate from chorismate: step 2/7. It participates in quinol/quinone metabolism; menaquinone biosynthesis. In terms of biological role, catalyzes the thiamine diphosphate-dependent decarboxylation of 2-oxoglutarate and the subsequent addition of the resulting succinic semialdehyde-thiamine pyrophosphate anion to isochorismate to yield 2-succinyl-5-enolpyruvyl-6-hydroxy-3-cyclohexene-1-carboxylate (SEPHCHC). This chain is 2-succinyl-5-enolpyruvyl-6-hydroxy-3-cyclohexene-1-carboxylate synthase, found in Shewanella sp. (strain MR-4).